A 514-amino-acid polypeptide reads, in one-letter code: 2-isopropylmalate synthase (514 aa).

A Pyruvate carboxyltransferase domain is found at 5–268 (LIIFDTTLRD…DVGLDTTQIV (264 aa)). Mn(2+)-binding residues include aspartate 14, histidine 202, histidine 204, and asparagine 239. A regulatory domain region spans residues 395–514 (KFVSLSQRSE…KDDKLNPQRS (120 aa)).

It belongs to the alpha-IPM synthase/homocitrate synthase family. LeuA type 1 subfamily. Homodimer. Requires Mn(2+) as cofactor.

It is found in the cytoplasm. It carries out the reaction 3-methyl-2-oxobutanoate + acetyl-CoA + H2O = (2S)-2-isopropylmalate + CoA + H(+). The protein operates within amino-acid biosynthesis; L-leucine biosynthesis; L-leucine from 3-methyl-2-oxobutanoate: step 1/4. Its function is as follows. Catalyzes the condensation of the acetyl group of acetyl-CoA with 3-methyl-2-oxobutanoate (2-ketoisovalerate) to form 3-carboxy-3-hydroxy-4-methylpentanoate (2-isopropylmalate). The polypeptide is 2-isopropylmalate synthase (Burkholderia ambifaria (strain MC40-6)).